A 62-amino-acid chain; its full sequence is MTSIFQLTLFALILFSFVLVVGVPVVFALPNGWTENKRIVLSGLGLWILLVFVVGILNSFVV.

A run of 2 helical transmembrane segments spans residues 8–28 (TLFALILFSFVLVVGVPVVFA) and 41–61 (LSGLGLWILLVFVVGILNSFV).

Belongs to the PsbZ family. In terms of assembly, PSII is composed of 1 copy each of membrane proteins PsbA, PsbB, PsbC, PsbD, PsbE, PsbF, PsbH, PsbI, PsbJ, PsbK, PsbL, PsbM, PsbT, PsbY, PsbZ, Psb30/Ycf12, at least 3 peripheral proteins of the oxygen-evolving complex and a large number of cofactors. It forms dimeric complexes.

It localises to the plastid. Its subcellular location is the chloroplast thylakoid membrane. Its function is as follows. May control the interaction of photosystem II (PSII) cores with the light-harvesting antenna, regulates electron flow through the 2 photosystem reaction centers. PSII is a light-driven water plastoquinone oxidoreductase, using light energy to abstract electrons from H(2)O, generating a proton gradient subsequently used for ATP formation. The protein is Photosystem II reaction center protein Z of Stigeoclonium helveticum (Green alga).